Here is a 165-residue protein sequence, read N- to C-terminus: Glycosyl-4,4'-diaponeurosporenoate acyltransferase (165 aa).

An N-terminal signal peptide occupies residues Met1–Leu28. A helical transmembrane segment spans residues Tyr126 to Tyr145.

It belongs to the acyltransferase CrtO family.

The protein resides in the cell membrane. It participates in carotenoid biosynthesis; staphyloxanthin biosynthesis; staphyloxanthin from farnesyl diphosphate: step 5/5. Its function is as follows. Catalyzes the acylation of glycosyl-4,4'-diaponeurosporenoate, i.e. the esterification of glucose at the C6'' position with the carboxyl group of the C(15) fatty acid 12-methyltetradecanoic acid, to yield staphyloxanthin. This is the last step in the biosynthesis of this orange pigment, present in most staphylococci strains. This Staphylococcus aureus (strain bovine RF122 / ET3-1) protein is Glycosyl-4,4'-diaponeurosporenoate acyltransferase (crtO).